Consider the following 864-residue polypeptide: Dynamin-1 (864 aa).

The Dynamin-type G domain occupies 28 to 294 (DLDLPQIAVV…LTNHIRDTLP (267 aa)). The interval 38–45 (GGQSAGKS) is G1 motif. Residues Ser-41, Gly-43, Lys-44, Ser-45, Ser-46, Arg-59, and Gly-60 each coordinate GDP. Residues 64–66 (VTR) form a G2 motif region. At Tyr-80 the chain carries Phosphotyrosine. The residue at position 125 (Tyr-125) is a 3'-nitrotyrosine; alternate. A Phosphotyrosine; alternate modification is found at Tyr-125. The segment at 136-139 (DLPG) is G3 motif. The interval 205-208 (TKLD) is G4 motif. 6 residues coordinate GDP: Lys-206, Asp-208, Asp-211, Asn-236, Arg-237, and Gln-239. Residues 235–238 (VNRS) form a G5 motif region. Phosphoserine is present on residues Ser-306 and Ser-347. Position 354 is a phosphotyrosine (Tyr-354). The residue at position 512 (Ser-512) is a Phosphoserine. The PH domain occupies 519–625 (LVIRKGWLTI…WKASFLRAGV (107 aa)). The region spanning 659–750 (VETIRNLVDS…IIGDINTTTV (92 aa)) is the GED domain. A disordered region spans residues 767-864 (SVPAGRRSPT…PESPRPPFDL (98 aa)). Ser-774 carries the phosphoserine; by GSK3-beta modification. Ser-778 bears the Phosphoserine mark. Arg-796 carries the omega-N-methylarginine modification. At Ser-822 the chain carries Phosphoserine. The segment covering 825 to 843 (PFGPPPQVPSRPNRAPPGV) has biased composition (pro residues). A phosphoserine mark is found at Ser-851 and Ser-857.

The protein belongs to the TRAFAC class dynamin-like GTPase superfamily. Dynamin/Fzo/YdjA family. Homodimer; homodimerization is mediated by the dynamin-type G domain which promotes assembly-stimulated GTPase activity. Homo-tetramer formed from two dimers in the absence of lipid. Oligomerizes into a helical polymer that self-assembles around the vesicle membrane, when associated to the menbrane through lipid binding. Interacts (via C-terminal proline-rich domain (PRD)) with SNX9 (via SH3 domain); this interaction allows regulation of DNM1 self-assembly during late stages of endocytic vesicle formation and supports DNM1's early functions in accelerating clathrin-coated pits (CCPs) maturation in non neuronals cell. Interacts (via C-terminal proline-rich domain (PRD)) with MYO1E (via SH3 domain); this interaction regulates receptor-mediated endocytosis. Interacts with SNX33 (via SH3 domain); this interaction decreases DNM1-dependent endocytosis. Interacts with DIAPH1. Interacts with GRB2 (via SH3 domain); this interaction mediates disassembly of DNM1 polymers, therefore modulates self-assembly. Forms a complex with BIN1 (via SH3 domain) and SH3GL2 (via SH3 domain). Forms a complex with SH3GL2 (via SH3 domain) and AMPH (via SH3 domain). Forms a complex with SH3GL2 (via SH3 domain) and SYNJ1. Interacts with AMPH. Interacts (via C-terminal proline-rich domain (PRD)) with SYT1; this interaction facilitates vesicle fission during clathrin-mediated endocytosis (CME). Interacts (via C-terminal proline-rich domain (PRD)) with PLCG1 (via SH3 domain); this interaction stimulates the release of GDP from DNM1 and enhances DNM1-dependent endocytosis. Interacts with SNPH; this interaction inhibits the binding of DNM1 to AMPH and DNM1-receptor-mediated endocytosis. Interacts with CAV1. Interacts with SH3GLB1 (via SH3 domain). Interacts with PACSIN1 (via SH3 domain), PACSIN2 (via SH3 domain) and PACSIN3 (via SH3 domain). Interacts with UNC119; this interaction decreases DNM1's GTPase activity and affects DNM1's interaction with AMPH. Interacts (GTP-bound form) with DNAJC6; this interaction allows clathrin-coated vesicle (CCV) formation at the plasma membrane. Post-translationally, phosphorylation at Ser-774 by GSK3B/GSK3-beta leads to inactivation of receptor-mediated endocytosis in non-neuronal cells. Dephosphorylation at Ser-774, through the EGFR downstream signaling, leads to activation and regulates early stages of clathrin-mediated endocytosis (CME). Phosphorylated by CDK5 leading to synaptic vesicle endocytosis (SVE) activation.

The protein resides in the cell membrane. Its subcellular location is the membrane. It localises to the clathrin-coated pit. It is found in the cytoplasmic vesicle. The protein localises to the presynapse. The protein resides in the secretory vesicle. Its subcellular location is the chromaffin granule. It carries out the reaction GTP + H2O = GDP + phosphate + H(+). With respect to regulation, GTPase activity is activated by 1-phosphatidyl-1D-myo-inositol 4,5-bisphosphate. GTPase activity is inhibited by the heterodimer G protein formed by GNB1 and GNG2 with an IC(50)=400 nM when DNM1 concentration is 5 nM. Functionally, catalyzes the hydrolysis of GTP and utilizes this energy to mediate vesicle scission and participates in many forms of endocytosis, such as clathrin-mediated endocytosis or synaptic vesicle endocytosis as well as rapid endocytosis (RE). Associates to the membrane, through lipid binding, and self-assembles into rings and stacks of interconnected rings through oligomerization to form a helical polymer around the vesicle membrane leading to constriction of invaginated coated pits around their necks. Self-assembly of the helical polymer induces membrane tubules narrowing until the polymer reaches a length sufficient to trigger GTP hydrolysis. Depending on the curvature imposed on the tubules, membrane detachment from the helical polymer upon GTP hydrolysis can cause spontaneous hemifission followed by complete fission. May play a role in regulating early stages of clathrin-mediated endocytosis in non-neuronal cells through its activation by dephosphorylation via the signaling downstream of EGFR. Controls vesicle size at a step before fission, during formation of membrane pits, at hippocampal synapses. Controls plastic adaptation of the synaptic vesicle recycling machinery to high levels of activity. Mediates rapid endocytosis (RE), a Ca(2+)-dependent and clathrin- and K(+)-independent process in chromaffin cells. Microtubule-associated force-producing protein involved in producing microtubule bundles and able to bind and hydrolyze GTP. Through its interaction with DNAJC6, acts during the early steps of clathrin-coated vesicle (CCV) formation. The chain is Dynamin-1 from Homo sapiens (Human).